The chain runs to 132 residues: T-cell receptor alpha chain V region 2B4 (132 aa).

Residues 1–20 (MKSLSVSLVVLWLLLNWVNS) form the signal peptide. Residues 21-113 (QQNVQQSPES…SALYLCAVTL (93 aa)) form a v segment region. Residue N42 is glycosylated (N-linked (GlcNAc...) asparagine). Residues 114–117 (YGGS) are d segment. The j segment stretch occupies residues 118–132 (GNKLIFGTGTLLSVK).

This chain is T-cell receptor alpha chain V region 2B4, found in Mus musculus (Mouse).